Here is a 396-residue protein sequence, read N- to C-terminus: Ribosomal RNA small subunit methyltransferase H (396 aa).

S-adenosyl-L-methionine-binding positions include 101–103 (GGH), Asp-120, Tyr-147, Asp-171, and Gln-178.

It belongs to the methyltransferase superfamily. RsmH family.

The protein resides in the cytoplasm. The catalysed reaction is cytidine(1402) in 16S rRNA + S-adenosyl-L-methionine = N(4)-methylcytidine(1402) in 16S rRNA + S-adenosyl-L-homocysteine + H(+). Functionally, specifically methylates the N4 position of cytidine in position 1402 (C1402) of 16S rRNA. The chain is Ribosomal RNA small subunit methyltransferase H from Mycobacterium bovis (strain ATCC BAA-935 / AF2122/97).